We begin with the raw amino-acid sequence, 387 residues long: Krueppel-like factor 17 (387 aa).

3 disordered regions span residues Phe28–Val54, Ser213–Ser234, and Arg257–Ser277. Over residues Asp30–Arg46 the composition is skewed to polar residues. The span at Arg257 to Ser270 shows a compositional bias: basic and acidic residues. C2H2-type zinc fingers lie at residues Tyr280–His304, Tyr310–His334, and His340–His362. A disordered region spans residues Gln357–Leu387.

Belongs to the Sp1 C2H2-type zinc-finger protein family.

The protein resides in the nucleus. Transcription repressor that binds to the promoter of target genes and prevents their expression. Acts as a negative regulator of epithelial-mesenchymal transition and metastasis in breast cancer. Specifically binds the 5'-CACCC-3' sequence in the promoter of ID1, a key metastasis regulator in breast cancer, and repress its expression. May be a germ cell-specific transcription factor that plays important roles in spermatid differentiation and oocyte development. In Sus scrofa (Pig), this protein is Krueppel-like factor 17 (KLF17).